The sequence spans 448 residues: Deoxyguanosinetriphosphate triphosphohydrolase-like protein (448 aa).

An HD domain is found at 67 to 260 (RLTHSLEVSQ…MELADDIAYG (194 aa)).

This sequence belongs to the dGTPase family. Type 2 subfamily.

The sequence is that of Deoxyguanosinetriphosphate triphosphohydrolase-like protein from Aliivibrio fischeri (strain ATCC 700601 / ES114) (Vibrio fischeri).